Reading from the N-terminus, the 155-residue chain is Small ribosomal subunit protein uS7c (155 aa).

It belongs to the universal ribosomal protein uS7 family. As to quaternary structure, part of the 30S ribosomal subunit.

The protein resides in the plastid. It is found in the chloroplast. Functionally, one of the primary rRNA binding proteins, it binds directly to 16S rRNA where it nucleates assembly of the head domain of the 30S subunit. In Lactoris fernandeziana, this protein is Small ribosomal subunit protein uS7c (rps7).